A 481-amino-acid chain; its full sequence is Neuronal acetylcholine receptor subunit eat-2 (481 aa).

The N-terminal stretch at 1–19 (MFLLLQILYILLFLNLADT) is a signal peptide. Topologically, residues 20-235 (SDDEYRLLKD…MHLKRRTMYY (216 aa)) are extracellular. Asn-93 carries N-linked (GlcNAc...) asparagine glycosylation. Cys-147 and Cys-161 are joined by a disulfide. The next 3 membrane-spanning stretches (helical) occupy residues 236–256 (GLNW…GFTM), 264–284 (VTLQ…VSEV), and 292–312 (IPII…SICV). Residues 313-443 (SLITVNIFYR…WRFMAMVIDR (131 aa)) lie on the Cytoplasmic side of the membrane. The disordered stretch occupies residues 356-384 (KPKREKKKEEEEDEESNAGGKEEESELIS). A helical membrane pass occupies residues 444–464 (ASLFLFTGLIFGTTFVIFAAC).

It belongs to the ligand-gated ion channel (TC 1.A.9) family. Acetylcholine receptor (TC 1.A.9.1) subfamily. In terms of assembly, neuronal AChR seems to be composed of two different type of subunits: alpha and beta.

The protein resides in the postsynaptic cell membrane. The protein localises to the cell membrane. After binding acetylcholine, the AChR responds by an extensive change in conformation that affects all subunits and leads to opening of an ion-conducting channel across the plasma membrane. Nicotinic acetylcholine receptor in the MC pharyngeal motor neuron involved in pharyngeal pumping. Has a role in the determination of life span possibly via calorific restriction which affects growth rate, although this is independent of metabolic activity. The chain is Neuronal acetylcholine receptor subunit eat-2 from Caenorhabditis briggsae.